The following is a 161-amino-acid chain: Large ribosomal subunit protein uL10 (161 aa).

This sequence belongs to the universal ribosomal protein uL10 family. Part of the ribosomal stalk of the 50S ribosomal subunit. The N-terminus interacts with L11 and the large rRNA to form the base of the stalk. The C-terminus forms an elongated spine to which L12 dimers bind in a sequential fashion forming a multimeric L10(L12)X complex.

Its function is as follows. Forms part of the ribosomal stalk, playing a central role in the interaction of the ribosome with GTP-bound translation factors. The polypeptide is Large ribosomal subunit protein uL10 (rplJ) (Mycoplasma pneumoniae (strain ATCC 29342 / M129 / Subtype 1) (Mycoplasmoides pneumoniae)).